We begin with the raw amino-acid sequence, 354 residues long: Opsin-5 (354 aa).

At 1–33 the chain is on the extracellular side; that stretch reads MALNHTALPQDERLPHYLRDGDPFASKLSWEAD. N4 is a glycosylation site (N-linked (GlcNAc...) asparagine). Residues 34–54 form a helical membrane-spanning segment; the sequence is LVAGFYLTIIGILSTFGNGYV. At 55–74 the chain is on the cytoplasmic side; it reads LYMSSRRKKKLRPAEIMTIN. Residues 75 to 95 traverse the membrane as a helical segment; it reads LAVCDLGISVVGKPFTIISCF. Topologically, residues 96–108 are extracellular; sequence CHRWVFGWIGCRW. A disulfide bridge links C106 with C183. The helical transmembrane segment at 109–129 threads the bilayer; that stretch reads YGWAGFFFGCGSLITMTAVSL. The Cytoplasmic segment spans residues 130-150; it reads DRYLKICYLSYGVWLKRKHAY. Residues 151-171 traverse the membrane as a helical segment; sequence ICLAAIWAYASFWTTMPLVGL. The Extracellular segment spans residues 172-197; it reads GDYVPEPFGTSCTLDWWLAQASVGGQ. The helical transmembrane segment at 198-218 threads the bilayer; that stretch reads VFILNILFFCLLLPTAVIVFS. The Cytoplasmic portion of the chain corresponds to 219–252; sequence YVKIIAKVKSSSKEVAHFDSRIHSSHVLEMKLTK. The helical transmembrane segment at 253-273 threads the bilayer; the sequence is VAMLICAGFLIAWIPYAVVSV. Over 274–288 the chain is Extracellular; the sequence is WSAFGRPDSIPIQLS. Residues 289-309 traverse the membrane as a helical segment; sequence VVPTLLAKSAAMYNPIIYQVI. Residue K296 is modified to N6-(retinylidene)lysine. The Cytoplasmic portion of the chain corresponds to 310-353; the sequence is DYKFACCQTGGLKATKKKSLEGFRLHTVTTVRKSSAVLEIHEEW. S-palmitoyl cysteine attachment occurs at residues C315 and C316.

Belongs to the G-protein coupled receptor 1 family. Opsin subfamily. In terms of processing, it is uncertain whether Cys-315 or Cys-316 is palmitoylated. In terms of tissue distribution, detected in brain and retina and cell lines derived from neural retina.

The protein localises to the cell membrane. Functionally, G-protein coupled receptor which selectively activates G(i) type G proteins via ultraviolet A (UVA) light-mediated activation in the retina. Preferentially binds the chromophore 11-cis retinal and is a bistable protein that displays emission peaks at 380 nm (UVA light) and 470 nm (blue light). Required for the light-response in the inner plexiform layer, and contributes to the regulation of the light-response in the nerve fiber layer, via phosphorylated DAT/SLC6A3 dopamine uptake. Involved in local corneal and retinal circadian rhythm photoentrainment via modulation of the UVA light-induced phase-shift of the retina clock. Acts as a circadian photoreceptor in the outer ear, via modulation of circadian clock-gene expression in response to violet light during the light-to-dark transition phase and night phase of the circadian cycle. Required in the retina to negatively regulate hyaloid vessel regression during postnatal development via light-dependent OPN5-SLC32A1-DRD2-VEGFR2 signaling. Involved in the light-dependent regulation of retina and vitreous compartment dopamine levels. This Homo sapiens (Human) protein is Opsin-5 (OPN5).